A 2462-amino-acid polypeptide reads, in one-letter code: Non-reducing polyketide synthase ausA (2462 aa).

The tract at residues 16–253 (VFFGPVYPEL…HTADHIPAMK (238 aa)) is N-terminal acylcarrier protein transacylase domain (SAT). Positions 385 to 801 (SAPIAVTGFA…GSNAVIVVKE (417 aa)) constitute a Ketosynthase family 3 (KS3) domain. Residues Cys550, His685, and His724 each act as for beta-ketoacyl synthase activity in the active site. Positions 904-1208 (LCFGGQTGDT…LPIDLQESTA (305 aa)) are malonyl-CoA:ACP transacylase (MAT) domain. Catalysis depends on Ser991, which acts as the For acyl/malonyl transferase activity. The tract at residues 1274-1403 (HDDGLLQLVE…GKVLLDPQAA (130 aa)) is N-terminal hotdog fold. The PKS/mFAS DH domain maps to 1274 to 1581 (HDDGLLQLVE…FTSVSIQSLK (308 aa)). The interval 1277 to 1580 (GLLQLVERDA…TFTSVSIQSL (304 aa)) is product template (PT) domain. Residue His1307 is the Proton acceptor; for dehydratase activity of the active site. A C-terminal hotdog fold region spans residues 1431–1581 (SSNGLKRATV…FTSVSIQSLK (151 aa)). Asp1489 functions as the Proton donor; for dehydratase activity in the catalytic mechanism. A Carrier domain is found at 1613–1690 (VSDDHHLRAV…GLAHRISPSS (78 aa)). Ser1650 carries the O-(pantetheine 4'-phosphoryl)serine modification. Residues 1850 to 2083 (QHASEHKLLR…GFNWVDWTDN (234 aa)) are methyltransferase (CMeT) domain. Residues 2112 to 2462 (TPARVETVRY…YEFLRQHVAV (351 aa)) form a thioesterase (TE) domain region. Active-site for thioesterase activity residues include Ser2235, Asp2398, and His2430.

It carries out the reaction 3 malonyl-CoA + acetyl-CoA + 2 S-adenosyl-L-methionine = 3,5-dimethylorsellinate + 2 S-adenosyl-L-homocysteine + 3 CO2 + 4 CoA. It functions in the pathway secondary metabolite biosynthesis; terpenoid biosynthesis. Functionally, non-reducing polyketide synthase; part of the gene cluster that mediates the biosynthesis of calidodehydroaustin, a fungal meroterpenoid. The first step of the pathway is the synthesis of 3,5-dimethylorsellinic acid by the polyketide synthase ausA. 3,5-dimethylorsellinic acid is then prenylated by the polyprenyl transferase ausN. Further epoxidation by the FAD-dependent monooxygenase ausM and cyclization by the probable terpene cyclase ausL lead to the formation of protoaustinoid A. Protoaustinoid A is then oxidized to spiro-lactone preaustinoid A3 by the combined action of the FAD-binding monooxygenases ausB and ausC, and the dioxygenase ausE. Acid-catalyzed keto-rearrangement and ring contraction of the tetraketide portion of preaustinoid A3 by ausJ lead to the formation of preaustinoid A4. The aldo-keto reductase ausK, with the help of ausH, is involved in the next step by transforming preaustinoid A4 into isoaustinone which is in turn hydroxylated by the P450 monooxygenase ausI to form austinolide. The cytochrome P450 monooxygenase ausG modifies austinolide to austinol. Austinol is further acetylated to austin by the O-acetyltransferase ausP, which spontaneously changes to dehydroaustin. The cytochrome P450 monooxygenase ausR then converts dehydroaustin is into 7-dehydrodehydroaustin. The hydroxylation catalyzed by ausR permits the O-acetyltransferase ausQ to add an additional acetyl group to the molecule, leading to the formation of acetoxydehydroaustin. The short chain dehydrogenase ausT catalyzes the reduction of the double bond present between carbon atoms 1 and 2 to convert 7-dehydrodehydroaustin into 1,2-dihydro-7-hydroxydehydroaustin. AusQ catalyzes not only an acetylation reaction but also the addition of the PKS ausV diketide product to 1,2-dihydro-7-hydroxydehydroaustin, forming precalidodehydroaustin. Finally, the iron/alpha-ketoglutarate-dependent dioxygenase converts precalidodehydroaustin into calidodehydroaustin. The sequence is that of Non-reducing polyketide synthase ausA from Aspergillus calidoustus.